The chain runs to 579 residues: Glutamine--tRNA ligase (579 aa).

The short motif at 41–51 is the 'HIGH' region element; that stretch reads PEPNGYLHIGH. ATP contacts are provided by residues 42–44 and 48–54; these read EPN and HIGHAKA. Residues Asp74 and Tyr218 each contribute to the L-glutamine site. ATP-binding positions include Thr237, 285–286, and 293–295; these read RL and MSK. The 'KMSKS' region motif lies at 292-296; it reads VMSKR.

The protein belongs to the class-I aminoacyl-tRNA synthetase family. Monomer.

Its subcellular location is the cytoplasm. It carries out the reaction tRNA(Gln) + L-glutamine + ATP = L-glutaminyl-tRNA(Gln) + AMP + diphosphate. This Xanthomonas oryzae pv. oryzae (strain MAFF 311018) protein is Glutamine--tRNA ligase.